The primary structure comprises 389 residues: G2/M cell-cycle inhibitor DR6 (389 aa).

Belongs to the Roseolovirus DR6 family.

The protein resides in the host nucleus. Inhibits the host G2/M cell-cycle progression in a p53-independent manner. This Homo sapiens (Human) protein is G2/M cell-cycle inhibitor DR6 (DR6L).